We begin with the raw amino-acid sequence, 1319 residues long: MMSRTVRLVLLALACTVDLSQASGFTENGLSLLSYQLCSYPVTRSVQKLQAVQTSHTAYVYCGGWIPWKKCPKTVYRTQYLAMDVPESRNVTDCCAGFEQLGLYCVLSLNRSREFASRPGVCPTAEAEPLSPSCSLDTDCSGLQKCCSWPGGRHCVSPTPTGTEKSMVSWYNVTVLVKVGFEDLQREDPGLRNHTRLLYSLVTSALQPLNPAVHYLTSTGGKDTFTTVSWLLMGFPRLMTVANVSVMLDDMVNRVYEVVSIQVQDVNECLHSELQACSVREQCRNLEGSYQCVSSQRLNHTDEDCPPIRDFVALNVTSSSFHVSWSLNSTQNYNFHIQVYKGKEILRSAWTRGHTMAVSDLEAGVLYRVRTSYLGCGANVSATLVVKTDAQVFQVTIRIMDRNLTEQILDCSSGEFWNFSRQLFHEVQNSFPQAISDLYRQGRLRMQIVSLQAGSLVVTLRLTLQDPDFSVGVHTLTPMLPVLSVSNVFQVDQQRTFVQDWDECAHSSEHDCHPSARCINLEGSYTCQCLTARDASPSRAGRVCEGDMVIPTGDELSVTTKVTVPAASTGITTFGPETLTESLSSKHPRSTPARSQTWTPVPPSVRDGGSIVRQDRNSTGQGQTHGTHQGTTDAPLHTTRESQELITKDPPFLTATTTGYVVWHSSPTWKTPPNSTRLQNEDPRSSSFPGPPSAPTDVTPESPACVPGPIGKVTVSNVTSTSFSLEWPADIRLSPAFHLTLVSPRGPAMTMETQNNNVTLSGLEWGTLYLVEIVAKVCGKEGARTQLKVRTVAQKLAGNVRITSMQYSESFLNTSSREHREFVELFFRTVRDSLPATLRQHMDAGRIRVDIINITNGSIVVEFNLLMTADLDVREVSAGFLNALQNTSMLEVVRGKTFMQDYNECDMKEDDCAPGTCRNTFGSFTCSCDEGGPDSQVEYSGRSCDGDPSGNMTQTPGSEWSPTPAGTRGVPVPIASSTAQDLPLRLNLMDAVSVSCEIETVIITIQKRFLQQAAIPEASLYLGEPSCNVSRSNSTHVFLVAGWGECGTILQSNMTTTVVTTTLRNNLSPEGVIHHPQFLSPIHCAFQNDVLTSSGYTPQWGVYTVIEDLHGTGNFVTEMQLYIGDSPIPQNYSVSASDEIKIEVGLHRQKSSLKVVLTECWATPSSNAKDPVTFSFINNSCPVPNTYTSVIQNGHSSKAQFKLRIFSFINNSIVYLHCKLRVCMENPRNSCRISCNDFRSLRSSEALHQMTWGPLHRTEGAQACTKPVLGTGYIILLAAAALLVVAGATTLLILRYQRVRQKYNLRIQTDDFSYQVFSQ.

Residues 1-22 form the signal peptide; the sequence is MMSRTVRLVLLALACTVDLSQA. The Extracellular segment spans residues 23–1273; the sequence is SGFTENGLSL…CTKPVLGTGY (1251 aa). Residues 34 to 107 enclose the EMI domain; the sequence is SYQLCSYPVT…FEQLGLYCVL (74 aa). 3 disulfide bridges follow: Cys-38–Cys-95, Cys-62–Cys-71, and Cys-94–Cys-105. N-linked (GlcNAc...) asparagine glycosylation is present at Asn-90. Asn-110 is a glycosylation site (N-linked (GlcNAc...) asparagine). A WAP domain is found at 115–159; that stretch reads FASRPGVCPTAEAEPLSPSCSLDTDCSGLQKCCSWPGGRHCVSPT. Residues Asn-172, Asn-193, and Asn-243 are each glycosylated (N-linked (GlcNAc...) asparagine). The region spanning 265–306 is the EGF-like 1; calcium-binding domain; it reads DVNECLHSELQACSVREQCRNLEGSYQCVSSQRLNHTDEDCP. Intrachain disulfides connect Cys-269–Cys-283 and Cys-277–Cys-292. Positions 307-391 constitute a Fibronectin type-III 1 domain; that stretch reads PIRDFVALNV…ATLVVKTDAQ (85 aa). A glycan (N-linked (GlcNAc...) asparagine) is linked at Asn-315. Positions 389–503 constitute an SEA 1 domain; it reads DAQVFQVTIR…QRTFVQDWDE (115 aa). In terms of domain architecture, EGF-like 2; calcium-binding spans 500-545; that stretch reads DWDECAHSSEHDCHPSARCINLEGSYTCQCLTARDASPSRAGRVCE. 3 disulfide bridges follow: Cys-504–Cys-518, Cys-512–Cys-527, and Cys-529–Cys-544. 2 disordered regions span residues 569–649 and 664–703; these read TGIT…ITKD and HSSP…PESP. Positions 619 to 632 are enriched in low complexity; the sequence is TGQGQTHGTHQGTT. A compositionally biased stretch (basic and acidic residues) spans 638–647; the sequence is TTRESQELIT. Residues 664–678 show a composition bias toward polar residues; that stretch reads HSSPTWKTPPNSTRL. In terms of domain architecture, Fibronectin type-III 2 spans 709–795; sequence PIGKVTVSNV…QLKVRTVAQK (87 aa). Residues Asn-717 and Asn-757 are each glycosylated (N-linked (GlcNAc...) asparagine). The SEA 2 domain maps to 792-904; that stretch reads VAQKLAGNVR…GKTFMQDYNE (113 aa). One can recognise an EGF-like 3; calcium-binding domain in the interval 901 to 945; it reads DYNECDMKEDDCAPGTCRNTFGSFTCSCDEGGPDSQVEYSGRSCD. 3 disulfide bridges follow: Cys-905-Cys-917, Cys-912-Cys-926, and Cys-928-Cys-944. The segment at 939–966 is disordered; the sequence is YSGRSCDGDPSGNMTQTPGSEWSPTPAG. A compositionally biased stretch (polar residues) spans 950-961; it reads GNMTQTPGSEWS. Asn-951 carries N-linked (GlcNAc...) asparagine glycosylation. The 244-residue stretch at 995–1238 folds into the ZP domain; that stretch reads SCEIETVIIT…NSCRISCNDF (244 aa). A disulfide bond links Cys-1160 and Cys-1218. Residues 1274 to 1294 traverse the membrane as a helical segment; it reads IILLAAAALLVVAGATTLLIL. Over 1295–1319 the chain is Cytoplasmic; it reads RYQRVRQKYNLRIQTDDFSYQVFSQ.

The protein localises to the cell membrane. In Mus musculus (Mouse), this protein is Uromodulin-like 1 (Umodl1).